Reading from the N-terminus, the 99-residue chain is Acylphosphatase (99 aa).

The Acylphosphatase-like domain maps to 5–97 (VRQVMIRGRV…RPGERFSQLP (93 aa)). Catalysis depends on residues arginine 20 and asparagine 38.

This sequence belongs to the acylphosphatase family.

It carries out the reaction an acyl phosphate + H2O = a carboxylate + phosphate + H(+). In Nitrobacter winogradskyi (strain ATCC 25391 / DSM 10237 / CIP 104748 / NCIMB 11846 / Nb-255), this protein is Acylphosphatase (acyP).